We begin with the raw amino-acid sequence, 197 residues long: Allatostatins (197 aa).

The signal sequence occupies residues 1–27 (MRSRTSVLTSSLAFLYFFGIVGRSALA). A propeptide spanning residues 28 to 56 (MEETPASSMNLQHYNNMLNPMVFDDTMPE) is cleaved from the precursor. I76 is modified (isoleucine amide). Residues 80–86 (WIDTNDN) constitute a propeptide that is removed on maturation. Residues L96, L106, L154, and L184 each carry the leucine amide modification. Residues 161 to 197 (YSGGQPLGSKRPNDMLSQRYHFGLGKRMSEDEEESSQ) form a disordered region. The propeptide occupies 188–197 (MSEDEEESSQ).

This sequence belongs to the allatostatin family.

The protein localises to the secreted. Functionally, neuropeptides. This chain is Allatostatins, found in Apis mellifera (Honeybee).